The sequence spans 251 residues: Pyrroloquinoline-quinone synthase (251 aa).

This sequence belongs to the PqqC family.

It carries out the reaction 6-(2-amino-2-carboxyethyl)-7,8-dioxo-1,2,3,4,7,8-hexahydroquinoline-2,4-dicarboxylate + 3 O2 = pyrroloquinoline quinone + 2 H2O2 + 2 H2O + H(+). The protein operates within cofactor biosynthesis; pyrroloquinoline quinone biosynthesis. Ring cyclization and eight-electron oxidation of 3a-(2-amino-2-carboxyethyl)-4,5-dioxo-4,5,6,7,8,9-hexahydroquinoline-7,9-dicarboxylic-acid to PQQ. The polypeptide is Pyrroloquinoline-quinone synthase (Cronobacter sakazakii (strain ATCC BAA-894) (Enterobacter sakazakii)).